Reading from the N-terminus, the 507-residue chain is Histidine ammonia-lyase (507 aa).

A cross-link (5-imidazolinone (Ser-Gly)) is located at residues 143-145; it reads SSG. The residue at position 144 (S144) is a 2,3-didehydroalanine (Ser).

It belongs to the PAL/histidase family. In terms of processing, contains an active site 4-methylidene-imidazol-5-one (MIO), which is formed autocatalytically by cyclization and dehydration of residues Ser-Ser-Gly.

The protein resides in the cytoplasm. It carries out the reaction L-histidine = trans-urocanate + NH4(+). The protein operates within amino-acid degradation; L-histidine degradation into L-glutamate; N-formimidoyl-L-glutamate from L-histidine: step 1/3. The protein is Histidine ammonia-lyase of Alkaliphilus metalliredigens (strain QYMF).